We begin with the raw amino-acid sequence, 367 residues long: Pectate trisaccharide-lyase (367 aa).

Positions Met1–Ala27 are cleaved as a signal peptide. Asp144, Asp166, and Asp170 together coordinate Ca(2+). Residues Ser151 to Lys173 form a PbH1 1 repeat. The active site involves Arg224. The PbH1 2 repeat unit spans residues Gly263 to Pro289.

The protein belongs to the polysaccharide lyase 1 family. Homotetramer. The cofactor is Ca(2+).

Its subcellular location is the secreted. The catalysed reaction is eliminative cleavage of unsaturated trigalacturonate as the major product from the reducing end of polygalacturonic acid/pectate.. Completely inactivated by EGTA. In terms of biological role, cleaves unsaturated trigalacturonate from pectin. Activity is highest towards polygalacturonic acid, activity on methylated pectins decreases with an increasing degree of methylation. The protein is Pectate trisaccharide-lyase of Thermotoga maritima (strain ATCC 43589 / DSM 3109 / JCM 10099 / NBRC 100826 / MSB8).